The sequence spans 510 residues: MASWTSSEFLYEEVKPPGIHFLERFRRSGKLSFKQYQAMVFVLTFIAYIAFHATRKPNSIVKGTLSEQPTGHFKGADKGGWAPFDGPDGTALLGQIDLAFLSVYAVGMFVAGHLGDRLDLRTFLTIGMVGTGVCTALFGVAFWANIHAFYYFLAIQTLAGWFQSIGWPCVVAVLGNWFDKKRRGVIMGVWSAHTSLGNIIGTLIATGLLKFGWGWSFVGPALLITFLGIVVYLFLPVNPHAVEAERDGSEVDSTMRLGDTITESFLSSRTSTGFDRRAVGFLAAWKIPGVAPFAFCLFFTKLVSYTFLYWLPFYVSQTEIGGEQLSQETSGNLSTLFDVGGVVGGILAGYFSDQLDGRAITAGGFIYLTIPALFLYRIYGHVSMTINIILMFVAGLFVNGPYALITTAVAADLGTHKSLKGNARALATVTAIIDGTGSVGAAIGPVLTGYIAAISWDAVFYMLMTAALISGLLLTTLIIEEVKTLLYGSSEEDHEVAAASTSRPPIDVLI.

Transmembrane regions (helical) follow at residues 31 to 51, 91 to 111, 123 to 143, 158 to 178, 185 to 205, 217 to 237, 279 to 299, 331 to 351, 355 to 375, 378 to 398, 436 to 456, and 459 to 479; these read LSFK…YIAF, ALLG…MFVA, FLTI…VAFW, LAGW…GNWF, VIMG…TLIA, FVGP…FLPV, VGFL…CLFF, GNLS…AGYF, LDGR…ALFL, IYGH…GLFV, TGSV…AISW, and VFYM…TLII.

This sequence belongs to the major facilitator superfamily. Organophosphate:Pi antiporter (OPA) (TC 2.A.1.4) family.

Its subcellular location is the membrane. This is Putative glycerol-3-phosphate transporter 3 from Arabidopsis thaliana (Mouse-ear cress).